The chain runs to 141 residues: Large ribosomal subunit protein uL11 (141 aa).

This sequence belongs to the universal ribosomal protein uL11 family. In terms of assembly, part of the ribosomal stalk of the 50S ribosomal subunit. Interacts with L10 and the large rRNA to form the base of the stalk. L10 forms an elongated spine to which L12 dimers bind in a sequential fashion forming a multimeric L10(L12)X complex. One or more lysine residues are methylated.

In terms of biological role, forms part of the ribosomal stalk which helps the ribosome interact with GTP-bound translation factors. The protein is Large ribosomal subunit protein uL11 of Lacticaseibacillus casei (strain BL23) (Lactobacillus casei).